The sequence spans 912 residues: Transcription factor bHLH140 (912 aa).

Residues 1–57 form a disordered region; that stretch reads MDDFNLRSENPNSSSTTSSSSSSFHRHKSETGNTKRSRSTSTLSTDPQSVAARDRRH. Positions 13-23 are enriched in low complexity; it reads SSSTTSSSSSS. Residues 43–92 enclose the bHLH domain; it reads LSTDPQSVAARDRRHRISDRFKILQSMVPGGAKMDTVSMLDEAISYVKFL. 234–241 contributes to the ATP binding site; sequence GPPGSGKS. In terms of domain architecture, Macro spans 511 to 690; it reads KAKASQKNID…KYKGSQDKAV (180 aa). The segment covering 657–666 has biased composition (polar residues); that stretch reads PKRSSQTAVS. The disordered stretch occupies residues 657 to 706; the sequence is PKRSSQTAVSDSGEDIKEDSERNKKYKGSQDKAVTNNLESESLEDTRGSG. The HIT domain occupies 720–829; it reads LHSIAMHPER…SQDFNSDSLK (110 aa). A C2H2-type zinc finger spans residues 870–893; the sequence is LRCNRCRSAHPNIPKLKSHVRSCH.

Homodimer.

The protein localises to the nucleus. The protein is Transcription factor bHLH140 (BHLH140) of Arabidopsis thaliana (Mouse-ear cress).